The following is a 588-amino-acid chain: MSILVIILILPILFGEVPPVNSGRVVDLNRNVRTDDHPTDLYPLYECGKQDTAVPISSWYGACRGSCSITRNTTDNTMEIFFRNDSVGWIDVLSLQTSPIRKNSHVTWYGECEKSSDVSSARPAPSEIIDTVAPAILDKMDTWPYGGAVFIYDTIDFPECKYTSDYSRSGWRIMVSKRSLELKSDISGEGYIIDPDLGFYFPISKGKGLGRFWWIWQQNSLSQQGCYFKTAGVVNCTLLLDTYTYSCPGINVAFSARIGNHLTSSCVGEVNISTDGITYKLHNQVSVGSISNQLISLWHQSEEALIQQLIIVINDALGKIESSYCESTCDLTEIAMSKHSDHPLVIETPVGPWLPASKGGEFVVIPCQSEPNLVVMTPIETCLSPFLIKVKSLKTGEVYWWMPTESHVSPDRQCLGHEEEELYLKSTQRKPLQFEFWKGAYIIDYPYNGSGRWIMNPGGFIHRSSKWFPSLTELSYTAPISLPTITEGVDKKVHQVIMSVGDIGNTTGSXWFAWMQPLGDKLARAVGSVASSLLIWWTTLEEEVKHGVIIVFFTVIGLIIAVPTLKMLLKGRRPYEPVKSPVVWGGPR.

A signal peptide spans 1–22 (MSILVIILILPILFGEVPPVNS). Over 23-547 (GRVVDLNRNV…TTLEEEVKHG (525 aa)) the chain is Virion surface. A helical transmembrane segment spans residues 548 to 568 (VIIVFFTVIGLIIAVPTLKML). Over 569–588 (LKGRRPYEPVKSPVVWGGPR) the chain is Intravirion.

The protein belongs to the nucleorhabdovirus glycoprotein family. Homotrimer. Interacts with matrix protein. Post-translationally, glycosylated by host. Glycosylation is crucial for glycoprotein export at the cell surface.

Its subcellular location is the virion membrane. Its function is as follows. Attaches the virus to host cellular receptor, inducing endocytosis of the virion. In the endosome, the acidic pH induces conformational changes in the glycoprotein trimer, which trigger fusion between virus and cell membrane. This Taro vein chlorosis virus (TAVCV) protein is Glycoprotein (G).